The following is a 343-amino-acid chain: Phosphatidylglycerol--prolipoprotein diacylglyceryl transferase 1 (343 aa).

4 consecutive transmembrane segments (helical) span residues 19 to 39 (VPLRGYAFCIIIGVFVAVWLG), 54 to 74 (ADIAVWAVPFGLIGGRLYHVI), 93 to 113 (IWEGGLGIWGAIAFGAVGAWI), and 119 to 139 (GVPMPAYADAVAPGIALAQAI). Arg141 is a binding site for a 1,2-diacyl-sn-glycero-3-phospho-(1'-sn-glycerol). A run of 3 helical transmembrane segments spans residues 176–196 (HPTFLYESLWCIGVALLVIWA), 202–224 (LGHGRAFALYVAAYCAGRFWIEY), and 238–258 (LNNWTALFVFLLAVLYIVLSA). The tract at residues 269 to 343 (EPGAETAAGD…TNGADSAKKG (75 aa)) is disordered. A compositionally biased stretch (basic and acidic residues) spans 283 to 293 (ADKDVKGTKDA). Positions 314–324 (APEDTSGADEA) are enriched in acidic residues.

The protein belongs to the Lgt family.

The protein localises to the cell membrane. It carries out the reaction L-cysteinyl-[prolipoprotein] + a 1,2-diacyl-sn-glycero-3-phospho-(1'-sn-glycerol) = an S-1,2-diacyl-sn-glyceryl-L-cysteinyl-[prolipoprotein] + sn-glycerol 1-phosphate + H(+). It functions in the pathway protein modification; lipoprotein biosynthesis (diacylglyceryl transfer). In terms of biological role, catalyzes the transfer of the diacylglyceryl group from phosphatidylglycerol to the sulfhydryl group of the N-terminal cysteine of a prolipoprotein, the first step in the formation of mature lipoproteins. This chain is Phosphatidylglycerol--prolipoprotein diacylglyceryl transferase 1, found in Streptomyces coelicolor (strain ATCC BAA-471 / A3(2) / M145).